A 189-amino-acid polypeptide reads, in one-letter code: GTP cyclohydrolase 1 (189 aa).

3 residues coordinate Zn(2+): cysteine 78, histidine 81, and cysteine 150.

The protein belongs to the GTP cyclohydrolase I family. In terms of assembly, toroid-shaped homodecamer, composed of two pentamers of five dimers.

It carries out the reaction GTP + H2O = 7,8-dihydroneopterin 3'-triphosphate + formate + H(+). Its pathway is cofactor biosynthesis; 7,8-dihydroneopterin triphosphate biosynthesis; 7,8-dihydroneopterin triphosphate from GTP: step 1/1. The chain is GTP cyclohydrolase 1 from Listeria innocua serovar 6a (strain ATCC BAA-680 / CLIP 11262).